The following is a 346-amino-acid chain: Protein RecA (346 aa).

An ATP-binding site is contributed by 65–72 (GPESSGKT).

Belongs to the RecA family.

It is found in the cytoplasm. Can catalyze the hydrolysis of ATP in the presence of single-stranded DNA, the ATP-dependent uptake of single-stranded DNA by duplex DNA, and the ATP-dependent hybridization of homologous single-stranded DNAs. It interacts with LexA causing its activation and leading to its autocatalytic cleavage. The protein is Protein RecA of Pseudomonas aeruginosa (strain UCBPP-PA14).